The primary structure comprises 383 residues: Putative transcription factor 282R (383 aa).

This sequence belongs to the IIV-6 282R family.

In terms of biological role, transcription activation. The sequence is that of Putative transcription factor 282R from Acheta domesticus (House cricket).